The chain runs to 422 residues: UDP-N-acetylglucosamine 1-carboxyvinyltransferase (422 aa).

Phosphoenolpyruvate is bound at residue 22–23 (KN). UDP-N-acetyl-alpha-D-glucosamine is bound at residue arginine 93. Cysteine 117 (proton donor) is an active-site residue. Position 117 is a 2-(S-cysteinyl)pyruvic acid O-phosphothioketal (cysteine 117). Residues 122–126 (RPVDQ), aspartate 309, and isoleucine 331 contribute to the UDP-N-acetyl-alpha-D-glucosamine site.

This sequence belongs to the EPSP synthase family. MurA subfamily.

It is found in the cytoplasm. It carries out the reaction phosphoenolpyruvate + UDP-N-acetyl-alpha-D-glucosamine = UDP-N-acetyl-3-O-(1-carboxyvinyl)-alpha-D-glucosamine + phosphate. It functions in the pathway cell wall biogenesis; peptidoglycan biosynthesis. Functionally, cell wall formation. Adds enolpyruvyl to UDP-N-acetylglucosamine. The protein is UDP-N-acetylglucosamine 1-carboxyvinyltransferase of Delftia acidovorans (strain DSM 14801 / SPH-1).